The following is an 89-amino-acid chain: Small ribosomal subunit protein bS20 (89 aa).

Residues M1–N21 form a disordered region. Positions A7–N21 are enriched in basic residues.

The protein belongs to the bacterial ribosomal protein bS20 family.

In terms of biological role, binds directly to 16S ribosomal RNA. This chain is Small ribosomal subunit protein bS20, found in Acinetobacter baylyi (strain ATCC 33305 / BD413 / ADP1).